The primary structure comprises 449 residues: C4-dicarboxylate transport protein 1 (449 aa).

The next 8 membrane-spanning stretches (helical) occupy residues 16-38 (FLQV…DLAV), 53-71 (MLIA…SGAG), 84-106 (VIYF…YSLG), 157-176 (ILQV…LVGE), 197-219 (GMIV…ARYG), 229-251 (LVLV…VLRL), 311-333 (GFSI…PLAM), and 358-380 (LVIL…VLVL).

It belongs to the dicarboxylate/amino acid:cation symporter (DAACS) (TC 2.A.23) family.

The protein resides in the cell inner membrane. In terms of biological role, responsible for the transport of dicarboxylates such as succinate, fumarate, and malate from the periplasm across the membrane. The polypeptide is C4-dicarboxylate transport protein 1 (dctA1) (Pseudomonas aeruginosa (strain ATCC 15692 / DSM 22644 / CIP 104116 / JCM 14847 / LMG 12228 / 1C / PRS 101 / PAO1)).